We begin with the raw amino-acid sequence, 270 residues long: Interleukin-1 alpha (270 aa).

Positions 1–112 (MAKVPDLFED…EVEEEIMKPR (112 aa)) are excised as a propeptide. K82 is subject to N6-acetyllysine. Residues 82–86 (KKRRL) form a nuclear localization signal (NLS) region. S87 carries the phosphoserine modification. Residue N139 is glycosylated (N-linked (GlcNAc...) asparagine).

Belongs to the IL-1 family. Monomer. Interacts with TMED10; the interaction mediates the translocation from the cytoplasm into the ERGIC (endoplasmic reticulum-Golgi intermediate compartment) and thereby secretion. Interacts with IL1R1. Interacts with S100A13; this interaction is the first step in the export of IL1A, followed by direct translocation of this complex across the plasma membrane. Post-translationally, acetylated within its nuclear localization sequence, which impacts subcellular localization. Proteolytic processed by CAPN1 in a calcium-dependent manner. Cleavage from 31 kDa precursor to 18 kDa biologically active molecules. In terms of processing, phosphorylated. Phosphorylation greatly enhances susceptibility to digestion and promotes the conversion of pre-IL1A alpha to the biologically active IL1A.

The protein resides in the nucleus. It is found in the cytoplasm. Its subcellular location is the secreted. Cytokine constitutively present intracellularly in nearly all resting non-hematopoietic cells that plays an important role in inflammation and bridges the innate and adaptive immune systems. After binding to its receptor IL1R1 together with its accessory protein IL1RAP, forms the high affinity interleukin-1 receptor complex. Signaling involves the recruitment of adapter molecules such as MYD88, IRAK1 or IRAK4. In turn, mediates the activation of NF-kappa-B and the three MAPK pathways p38, p42/p44 and JNK pathways. Within the cell, acts as an alarmin and cell death results in its liberation in the extracellular space after disruption of the cell membrane to induce inflammation and alert the host to injury or damage. In addition to its role as a danger signal, which occurs when the cytokine is passively released by cell necrosis, directly senses DNA damage and acts as signal for genotoxic stress without loss of cell integrity. This chain is Interleukin-1 alpha (IL1A), found in Felis catus (Cat).